The sequence spans 297 residues: N-acetylneuraminate lyase (297 aa).

Aceneuramate-binding residues include S47 and T48. Y137 (proton donor) is an active-site residue. Catalysis depends on K165, which acts as the Schiff-base intermediate with substrate. Aceneuramate contacts are provided by T167, G189, D191, E192, and S208.

The protein belongs to the DapA family. NanA subfamily. Homotetramer.

It is found in the cytoplasm. It catalyses the reaction aceneuramate = aldehydo-N-acetyl-D-mannosamine + pyruvate. The protein operates within amino-sugar metabolism; N-acetylneuraminate degradation; D-fructose 6-phosphate from N-acetylneuraminate: step 1/5. Functionally, catalyzes the reversible aldol cleavage of N-acetylneuraminic acid (sialic acid; Neu5Ac) to form pyruvate and N-acetylmannosamine (ManNAc) via a Schiff base intermediate. This chain is N-acetylneuraminate lyase, found in Enterobacter sp. (strain 638).